Consider the following 426-residue polypeptide: Phosphomethylpyrimidine synthase (426 aa).

Residues Asn65, Met94, Tyr123, His162, 184-186 (SRG), 225-228 (DGMR), and Glu264 contribute to the substrate site. His268 contributes to the Zn(2+) binding site. A substrate-binding site is contributed by Tyr291. His332 is a binding site for Zn(2+). [4Fe-4S] cluster is bound by residues Cys408, Cys411, and Cys415.

The protein belongs to the ThiC family. Requires [4Fe-4S] cluster as cofactor.

It carries out the reaction 5-amino-1-(5-phospho-beta-D-ribosyl)imidazole + S-adenosyl-L-methionine = 4-amino-2-methyl-5-(phosphooxymethyl)pyrimidine + CO + 5'-deoxyadenosine + formate + L-methionine + 3 H(+). Its pathway is cofactor biosynthesis; thiamine diphosphate biosynthesis. Functionally, catalyzes the synthesis of the hydroxymethylpyrimidine phosphate (HMP-P) moiety of thiamine from aminoimidazole ribotide (AIR) in a radical S-adenosyl-L-methionine (SAM)-dependent reaction. This is Phosphomethylpyrimidine synthase from Methanococcus maripaludis (strain C6 / ATCC BAA-1332).